The sequence spans 447 residues: MTKQIITLVGRPNVGKSTLFNRLSIRKKAIVHDLPGVTRDRKYTDGKIGSFEFLLIDTPGLDENPNSMGERLIEQTTKAILEADLICFMVDGRSGILPDDKLLSSFVRKYNKPAILVVNKCEKAFDFDKEYYKLGFDSMIAISAEHGTGLIDLYDEIIAKLPEEESIETNIADPIKGDCLQIVVSGRPNAGKSTFINALINDERLLTGPEAGITRESIEIDWQYKNNHIKLIDTAGLRKKSTITESLEKLSASDTINSIKFANTVILMIDALAPLKQQDLNIASHVVNEGRSIVIVVNKWDLVKESEKEAFQEEFYYQINTHLPQVKGIPVLFISAINKQNIEQVLDACLKIYKIWNKKITTSKLNEWLNFTTKAHLLPLQKGGRRVRVKYMTQTKTRPPTFKLFSNNPEKITDSYTRYLVNNMREAFDMPGIPIRFIYVKTKNPYV.

2 EngA-type G domains span residues 4-165 (QIIT…PEEE) and 180-357 (LQIV…KIWN). Residues 10 to 17 (GRPNVGKS), 57 to 61 (DTPGL), 119 to 122 (NKCE), 186 to 193 (GRPNAGKS), 233 to 237 (DTAGL), and 298 to 301 (NKWD) contribute to the GTP site. In terms of domain architecture, KH-like spans 358 to 443 (KKITTSKLNE…PIRFIYVKTK (86 aa)).

The protein belongs to the TRAFAC class TrmE-Era-EngA-EngB-Septin-like GTPase superfamily. EngA (Der) GTPase family. Associates with the 50S ribosomal subunit.

In terms of biological role, GTPase that plays an essential role in the late steps of ribosome biogenesis. This Rickettsia peacockii (strain Rustic) protein is GTPase Der.